Consider the following 492-residue polypeptide: Probable cobyric acid synthase (492 aa).

One can recognise a GATase cobBQ-type domain in the interval 252-444 (PIEVNIVKFS…FHGILENFEF (193 aa)). The Nucleophile role is filled by Cys330. His436 is a catalytic residue.

This sequence belongs to the CobB/CobQ family. CobQ subfamily.

It functions in the pathway cofactor biosynthesis; adenosylcobalamin biosynthesis. Functionally, catalyzes amidations at positions B, D, E, and G on adenosylcobyrinic A,C-diamide. NH(2) groups are provided by glutamine, and one molecule of ATP is hydrogenolyzed for each amidation. This is Probable cobyric acid synthase from Methanococcus maripaludis (strain C6 / ATCC BAA-1332).